A 132-amino-acid polypeptide reads, in one-letter code: Tail tube terminator protein (132 aa).

Belongs to the lambda-like tail terminator protein family. In terms of assembly, homohexamer. May bind to major tail protein and /or tape measure protein.

It is found in the virion. The protein localises to the host cytoplasm. Its function is as follows. Plays an essential role in tail assembly by capping the rapidly polymerizing tail once it has reached its requisite length and serving as the interaction surface for the completion protein. The chain is Tail tube terminator protein from Escherichia phage N15 (Bacteriophage N15).